A 103-amino-acid chain; its full sequence is MTVLERLAATVEARKGADPDSSWTAKLLAKGPEKCAEKFGEEAVEAIIEAVRGDRARLASEAADVLYHLLVMLAARDVTLAEVMAVLEAREGTSGIAEKAGRG.

The protein belongs to the PRA-PH family.

It is found in the cytoplasm. The enzyme catalyses 1-(5-phospho-beta-D-ribosyl)-ATP + H2O = 1-(5-phospho-beta-D-ribosyl)-5'-AMP + diphosphate + H(+). Its pathway is amino-acid biosynthesis; L-histidine biosynthesis; L-histidine from 5-phospho-alpha-D-ribose 1-diphosphate: step 2/9. This is Phosphoribosyl-ATP pyrophosphatase from Cereibacter sphaeroides (strain ATCC 17029 / ATH 2.4.9) (Rhodobacter sphaeroides).